Here is a 272-residue protein sequence, read N- to C-terminus: Phosphate import ATP-binding protein PstB 1 (272 aa).

An ABC transporter domain is found at 26–267 (ISIENLNLFY…PMKKQTEDYI (242 aa)). ATP is bound at residue 58-65 (GPSGCGKS).

This sequence belongs to the ABC transporter superfamily. Phosphate importer (TC 3.A.1.7) family. In terms of assembly, the complex is composed of two ATP-binding proteins (PstB), two transmembrane proteins (PstC and PstA) and a solute-binding protein (PstS).

The protein resides in the cell inner membrane. The enzyme catalyses phosphate(out) + ATP + H2O = ADP + 2 phosphate(in) + H(+). In terms of biological role, part of the ABC transporter complex PstSACB involved in phosphate import. Responsible for energy coupling to the transport system. The protein is Phosphate import ATP-binding protein PstB 1 of Vibrio parahaemolyticus serotype O3:K6 (strain RIMD 2210633).